The chain runs to 387 residues: 3-ketoacyl-CoA thiolase (387 aa).

Residue Cys91 is the Acyl-thioester intermediate of the active site. Residues His343 and Cys373 each act as proton acceptor in the active site.

It belongs to the thiolase-like superfamily. Thiolase family. As to quaternary structure, heterotetramer of two alpha chains (FadB) and two beta chains (FadA).

It localises to the cytoplasm. The enzyme catalyses an acyl-CoA + acetyl-CoA = a 3-oxoacyl-CoA + CoA. Its pathway is lipid metabolism; fatty acid beta-oxidation. In terms of biological role, catalyzes the final step of fatty acid oxidation in which acetyl-CoA is released and the CoA ester of a fatty acid two carbons shorter is formed. The chain is 3-ketoacyl-CoA thiolase from Yersinia enterocolitica serotype O:8 / biotype 1B (strain NCTC 13174 / 8081).